The sequence spans 1177 residues: Tyrosine-protein kinase hopscotch (1177 aa).

The segment at 1–41 (MALANGGEDRMDDSSSGRTSLADSASLTNSSLRSGTSSQSI) is disordered. Residues 16-41 (SGRTSLADSASLTNSSLRSGTSSQSI) show a composition bias toward polar residues. A phosphoserine mark is found at Ser-40 and Ser-321. The FERM domain maps to 46 to 414 (GTIRVFNFTT…IYIRLSSKWM (369 aa)). An SH2; atypical domain is found at 433 to 539 (HCHGPIGGAY…YRIPASKYDK (107 aa)). 2 Protein kinase domains span residues 582–843 (YPDS…AEIL) and 892–1164 (YNME…HPTD). Residues 898–906 (IGRGHYGTV) and Lys-926 contribute to the ATP site. Asp-1014 acts as the Proton acceptor in catalysis. Residues Tyr-1047 and Tyr-1048 each carry the phosphotyrosine; by autocatalysis modification. Residues 1158–1177 (KVTHPTDGHQSPPNQPTDAE) are disordered.

It belongs to the protein kinase superfamily. Tyr protein kinase family. JAK subfamily. As to quaternary structure, forms a complex with Hsp83 and piwi; probably Hop mediates the interaction between piwi and Hsp83.

It localises to the endomembrane system. It catalyses the reaction L-tyrosyl-[protein] + ATP = O-phospho-L-tyrosyl-[protein] + ADP + H(+). Functionally, tyrosine kinase of the non-receptor type, phosphorylates the marelle protein. Required maternally for the establishment of the normal array of embryonic segments: involved in the control of pair-rule gene transcription in a stripe-specific manner. Together with Hsp83 and piwi, mediates canalization, also known as developmental robustness, likely via epigenetic silencing of existing genetic variants and suppression of transposon-induced new genetic variation. The sequence is that of Tyrosine-protein kinase hopscotch (hop) from Drosophila melanogaster (Fruit fly).